The chain runs to 281 residues: 3-hydroxybutyryl-CoA dehydrogenase (281 aa).

It belongs to the 3-hydroxyacyl-CoA dehydrogenase family.

The enzyme catalyses (3S)-3-hydroxybutanoyl-CoA + NADP(+) = acetoacetyl-CoA + NADPH + H(+). The protein operates within lipid metabolism; butanoate metabolism. The sequence is that of 3-hydroxybutyryl-CoA dehydrogenase (hbd) from Clostridioides difficile (Peptoclostridium difficile).